Reading from the N-terminus, the 229-residue chain is MVGNKQVLYKLVVLGDGGVGKTALTIQLCLEHFVETYDPTIEDSYRKQVVIDGQACMLEVLDTAGQEEYTALRDQWIRDGEGFVLVYSISSRSSFARIKKFHHQIQRVKESTSSPSAYPGSSPLAATNPSAPVPIMLVGNKSDRVTEREVSTQEGHALARELGCEFTEASAKTRTNVEKAFYDVVKQLRKQRQQGQSTPRALPPSGNSKSEKYSGTEKPKRPRGKCLII.

GTP is bound at residue 15–22 (GDGGVGKT). An Effector region motif is present at residues 37-45 (YDPTIEDSY). A GTP-binding site is contributed by 62–66 (DTAGQ). Positions 109–132 (KESTSSPSAYPGSSPLAATNPSAP) are disordered. Over residues 111–126 (STSSPSAYPGSSPLAA) the composition is skewed to low complexity. 140-143 (NKSD) lines the GTP pocket. The tract at residues 188 to 229 (LRKQRQQGQSTPRALPPSGNSKSEKYSGTEKPKRPRGKCLII) is disordered. Over residues 209 to 219 (KSEKYSGTEKP) the composition is skewed to basic and acidic residues. The segment covering 220-229 (KRPRGKCLII) has biased composition (basic residues). Cys226 bears the Cysteine methyl ester mark. Residue Cys226 is the site of S-farnesyl cysteine attachment. The propeptide at 227–229 (LII) is removed in mature form.

It belongs to the small GTPase superfamily. Ras family.

It localises to the cell membrane. It catalyses the reaction GTP + H2O = GDP + phosphate + H(+). Functionally, ras proteins bind GDP/GTP and possess intrinsic GTPase activity. This is Protein ras-2 (ras-2) from Neurospora crassa (strain ATCC 24698 / 74-OR23-1A / CBS 708.71 / DSM 1257 / FGSC 987).